A 397-amino-acid polypeptide reads, in one-letter code: MARKLFTSESVTEGHPDKICDQISDAVLDAIFSQDPMARVACETAVTTGLVLVTGEITTNCYVDIPKIVRSTIREIGYDRAKYGFDCDTCAVLTSIDEQSPDIAMGVNKALEAKTGEMSDEEIEAIGAGDQGMMFGFACDETPELMPMPISLAHKLAMRLSQVRKNGTLNYLRPDGKSQVTVEYDGDKPVRVDTVLISTQHGPEVDYDTIKRDVIEHVIKPVIPAELLDSKTKYLVNPTGRFVIGGPQGDSGLTGRKIIVDTYGGYARHGGGAFSGKDPTKVDRSAAYAARYVAKNIVAAGLARKCEVQLAYAIGVARPVSVRVDTFGTGIIPEEKIESLVNKYFDLRPAGIIKTLDLRRPIYKQTAAYGHFGRTDIDLPWERTDKAEELRKEAQSL.

His15 serves as a coordination point for ATP. Asp17 provides a ligand contact to Mg(2+). Glu43 is a binding site for K(+). Residues Glu56 and Gln99 each contribute to the L-methionine site. The flexible loop stretch occupies residues 99–109; it reads QSPDIAMGVNK. ATP-binding positions include 175-177, 241-242, Asp250, 256-257, Ala273, and Lys277; these read DGK, RF, and RK. Residue Asp250 coordinates L-methionine. Lys281 contacts L-methionine.

It belongs to the AdoMet synthase family. As to quaternary structure, homotetramer; dimer of dimers. It depends on Mg(2+) as a cofactor. The cofactor is K(+).

The protein resides in the cytoplasm. The enzyme catalyses L-methionine + ATP + H2O = S-adenosyl-L-methionine + phosphate + diphosphate. Its pathway is amino-acid biosynthesis; S-adenosyl-L-methionine biosynthesis; S-adenosyl-L-methionine from L-methionine: step 1/1. Catalyzes the formation of S-adenosylmethionine (AdoMet) from methionine and ATP. The overall synthetic reaction is composed of two sequential steps, AdoMet formation and the subsequent tripolyphosphate hydrolysis which occurs prior to release of AdoMet from the enzyme. The polypeptide is S-adenosylmethionine synthase (Acetivibrio thermocellus (strain ATCC 27405 / DSM 1237 / JCM 9322 / NBRC 103400 / NCIMB 10682 / NRRL B-4536 / VPI 7372) (Clostridium thermocellum)).